Reading from the N-terminus, the 335-residue chain is UPF0353 protein Mvan_2751 (335 aa).

Helical transmembrane passes span 18 to 38 (WFFL…IVQM) and 67 to 87 (LPAV…AGPT). Positions 98–294 (VVMLVIDVSQ…EQLKQVFTNL (197 aa)) constitute a VWFA domain. Residues 309–329 (VGWLRIGSLVLALAALGALLI) form a helical membrane-spanning segment.

This sequence belongs to the UPF0353 family.

It is found in the cell membrane. This chain is UPF0353 protein Mvan_2751, found in Mycolicibacterium vanbaalenii (strain DSM 7251 / JCM 13017 / BCRC 16820 / KCTC 9966 / NRRL B-24157 / PYR-1) (Mycobacterium vanbaalenii).